A 475-amino-acid polypeptide reads, in one-letter code: MSPKTETKASVGFKAGVKEYKLTYYTPEYETKDTDILAAFRVTPQPGVPPEEAGAAVAAESSTGTWTTVWTDGLTSLDRYKGRCYHIEPVPGEESQFIAYVAYPLDLFEEGSVTNMFTSIVGNVFGFKALRALRLEDLRIPTAYVKTFQGPPHGIQVERDKLNKYGRPLLGCTIKPKLGLSAKNYGRAVYECLRGGLDFTKDDENVNSQPFMRWRDRFLFCAEAIYKAQAETGEIKGHYLNATAGTCEEMMKRAIFARELGVPIVMHDYLTGGFTANTTLAHYCRDNGLLLHIHRAMHAVIDRQKNHGIHFRVLAKALRMSGGDHIHAGTVVGKLEGERDITLGFVDLLRDDFIEKDRSRGIYFTQDWVSLPGVLPVASGGIHVWHMPALTEIFGDDSVLQFGGGTLGHPWGNAPGAVANRVALEACVQARNEGRDLASQGNEIIREASKWSPELAAACEVWKEIKFEFKAVDTL.

Residues 1–2 (MS) constitute a propeptide that is removed on maturation. Proline 3 carries the post-translational modification N-acetylproline. Lysine 14 is subject to N6,N6,N6-trimethyllysine. 2 residues coordinate substrate: asparagine 123 and threonine 173. Lysine 175 functions as the Proton acceptor in the catalytic mechanism. Lysine 177 contacts substrate. Residues lysine 201, aspartate 203, and glutamate 204 each coordinate Mg(2+). Lysine 201 is modified (N6-carboxylysine). The active-site Proton acceptor is the histidine 294. Arginine 295, histidine 327, and serine 379 together coordinate substrate.

The protein belongs to the RuBisCO large chain family. Type I subfamily. Heterohexadecamer of 8 large chains and 8 small chains; disulfide-linked. The disulfide link is formed within the large subunit homodimers. Requires Mg(2+) as cofactor. The disulfide bond which can form in the large chain dimeric partners within the hexadecamer appears to be associated with oxidative stress and protein turnover.

Its subcellular location is the plastid. The protein resides in the chloroplast. The enzyme catalyses 2 (2R)-3-phosphoglycerate + 2 H(+) = D-ribulose 1,5-bisphosphate + CO2 + H2O. It catalyses the reaction D-ribulose 1,5-bisphosphate + O2 = 2-phosphoglycolate + (2R)-3-phosphoglycerate + 2 H(+). In terms of biological role, ruBisCO catalyzes two reactions: the carboxylation of D-ribulose 1,5-bisphosphate, the primary event in carbon dioxide fixation, as well as the oxidative fragmentation of the pentose substrate in the photorespiration process. Both reactions occur simultaneously and in competition at the same active site. The chain is Ribulose bisphosphate carboxylase large chain from Magnolia acuminata (Cucumber tree).